The chain runs to 230 residues: Inactive 2-(S)-hydroxypropyl-CoM dehydrogenase 2 (230 aa).

The protein belongs to the short-chain dehydrogenases/reductases (SDR) family.

The sequence is that of Inactive 2-(S)-hydroxypropyl-CoM dehydrogenase 2 from Xanthobacter autotrophicus (strain ATCC BAA-1158 / Py2).